A 437-amino-acid polypeptide reads, in one-letter code: MRRYFGTDGVRGEAGKPPLTPEFVLKLGQAAGAYFLAQEKRPVVLLAKDTRESSDLLEAALAAGLMSQGVRVEHLGVLPTPGVAHLTKALKATAGAVISASHNPYQDNGIKFFGPTGEKLPDGAEEEIERLLLEDHPTRGIGTVGDFREAERMYLDFLLAHAPDLTGLKVGLDLAHGATYRIGPKLFQKAGAEVMAFFNTPDGRNINRGCGSTHPEALSRFVVELGLDLGIAFDGDGDRVQFIDRKGRLFHGDHVLYLAALAFGEKGVVGTVMSNMALEVALKERGLAFHRAAVGDRYVLEKLKETGLALGGEPSGHVIFLRHHTTGDGLLTALLTLKALKALGGDLADWYEALPLYPQVLLNVRVSDKAKVMADPRLGEAVREAEARLGGRGRVNVRPSGTEPVVRVMVEAEEGAEEVARELAERVRALSQEAQAV.

Ser-101 functions as the Phosphoserine intermediate in the catalytic mechanism. Ser-101, Asp-234, Asp-236, and Asp-238 together coordinate Mg(2+). Ser-101 is subject to Phosphoserine.

Belongs to the phosphohexose mutase family. Mg(2+) serves as cofactor. Post-translationally, activated by phosphorylation.

It carries out the reaction alpha-D-glucosamine 1-phosphate = D-glucosamine 6-phosphate. Functionally, catalyzes the conversion of glucosamine-6-phosphate to glucosamine-1-phosphate. In Thermus thermophilus (strain ATCC 27634 / DSM 579 / HB8), this protein is Phosphoglucosamine mutase.